The primary structure comprises 445 residues: NADH-quinone oxidoreductase subunit F (445 aa).

An NAD(+)-binding site is contributed by 61–70 (GRGGAGFSTG). Position 174-221 (174-221 (GAGRYICGEETALINSLEGRRANPRSKPPFPATSGVWGKPTCVNNVET)) interacts with FMN. The [4Fe-4S] cluster site is built by cysteine 351, cysteine 354, cysteine 357, and cysteine 398.

The protein belongs to the complex I 51 kDa subunit family. In terms of assembly, composed of 13 different subunits. Subunits NuoCD, E, F, and G constitute the peripheral sector of the complex. It depends on FMN as a cofactor. [4Fe-4S] cluster serves as cofactor.

It carries out the reaction a quinone + NADH + 5 H(+)(in) = a quinol + NAD(+) + 4 H(+)(out). Its function is as follows. NDH-1 shuttles electrons from NADH, via FMN and iron-sulfur (Fe-S) centers, to quinones in the respiratory chain. The immediate electron acceptor for the enzyme in this species is believed to be ubiquinone. Couples the redox reaction to proton translocation (for every two electrons transferred, four hydrogen ions are translocated across the cytoplasmic membrane), and thus conserves the redox energy in a proton gradient. This chain is NADH-quinone oxidoreductase subunit F (nuoF), found in Salmonella typhimurium (strain LT2 / SGSC1412 / ATCC 700720).